A 538-amino-acid polypeptide reads, in one-letter code: MNLELLESFGQNYPEEADGTLDCISMALTCTFNRWGTLLAVGCNDGRIVIWDFLTRGIAKIISAHIHPVCSLCWSRDGHKLVSASTDNIVSQWDVLSGDCDQRFRFPSPILKVQYHPRDQNKVLVCPMKSAPVMLTLSDSKHVVLPVDDDSDLNVVASFDRRGEYIYTGNAKGKILVLKTDSQDLVASFRVTTGTSNTTAIKSIEFARKGSCFLINTADRIIRVYDGREILTCGRDGEPEPMQKLQDLVNRTPWKKCCFSGDGEYIVAGSARQHALYIWEKSIGNLVKILHGTRGELLLDVAWHPVRPIIASISSGVVSIWAQNQVENWSAFAPDFKELDENVEYEERESEFDIEDEDKSEPEQTGADAAEDEEVDVTSVDPIAAFCSSDEELEDSKALLYLPIAPEVEDPEENPYGPPPDAVQTSLMDEGASSEKKRQSSADGSQPPKKKPKTTNIELQGVPNDEVHPLLGVKGDGKSKKKQAGRPKGSKGKEKDSPFKPKLYKGDRGLPLEGSAKGKVQAELSQPLTAGGAISELL.

WD repeat units follow at residues 22–63 (DCIS…KIIS) and 64–103 (AHIH…CDQR). Lys-129 is covalently cross-linked (Glycyl lysine isopeptide (Lys-Gly) (interchain with G-Cter in SUMO2)). WD repeat units follow at residues 148-188 (DDDS…LVAS), 196-235 (SNTT…TCGR), 249-291 (VNRT…KILH), and 293-331 (TRGE…NWSA). Thr-252 is subject to Phosphothreonine; by CDK1. The segment at 330-366 (SAFAPDFKELDENVEYEERESEFDIEDEDKSEPEQTG) is interaction with ASH2L. Over residues 344 to 360 (EYEERESEFDIEDEDKS) the composition is skewed to acidic residues. Positions 344-377 (EYEERESEFDIEDEDKSEPEQTGADAAEDEEVDV) are disordered. Residue Ser-350 is modified to Phosphoserine. An interaction with WDR5 region spans residues 371–380 (EDEEVDVTSV). Ser-388 and Ser-389 each carry phosphoserine. The segment at 408–538 (VEDPEENPYG…TAGGAISELL (131 aa)) is disordered. Positions 479-490 (SKKKQAGRPKGS) are enriched in basic residues. Positions 491-510 (KGKEKDSPFKPKLYKGDRGL) are enriched in basic and acidic residues. Ser-497 carries the phosphoserine; by CDK1 modification. A Phosphoserine modification is found at Ser-525.

Component of the SET1 complex, at least composed of the catalytic subunit (SETD1A or SETD1B), WDR5, WDR82, RBBP5, ASH2L/ASH2, CXXC1/CFP1, HCFC1 and DPY30. Core component of several methyltransferase-containing complexes including MLL1/MLL, MLL2/3 (also named ASCOM complex) and MLL4/WBP7. Each complex is at least composed of ASH2L, RBBP5, WDR5, DPY30, one or more specific histone methyltransferases (KMT2A/MLL1, KMT2D/MLL2, KMT2C/MLL3 and KMT2B/MLL4), and the facultative components PAGR1, BACC1, CHD8, E2F6, HCFC1, HCFC2, HSP70, INO80C, KDM6A, KANSL1, LAS1L, MAX, MCRS1, MEN1, MGA, MYST1/MOF, NCOA6, PAXIP1/PTIP, PELP1, PHF20, PRP31, RING2, RUVB1/TIP49A, RUVB2/TIP49B, SENP3, TAF1, TAF4, TAF6, TAF7, TAF9, TEX10 and alpha- and beta-tubulin. Component of a histone methylation complex composed of at least ZNF335, RBBP5, ASH2L and WDR5; the complex may have histone H3-specific methyltransferase activity, however does not have specificity for 'Lys-4' of histone H3. Interacts with ZNF335. Interacts with ASH2L; the interaction is direct. Interacts with WDR5; the interaction is direct. Components of the ZNF335-RBBP5-ASH2L-WDR5 histone methylation complex may associate with components of a nuclear receptor-mediated transcription complex to form a complex at least composed of ZNF335, HCFC1, CCAR2, EMSY, MKI67, RBBP5, ASH2L and WDR5. Within this complex interacts with EMSY. Found in a complex with RBBP5, ASH2L, DPY30, KMT2A, KMT2D and WDR5. Interacts with SETD1A. Interacts with WDR82. In terms of tissue distribution, ubiquitously expressed.

Its subcellular location is the nucleus. Functionally, in embryonic stem (ES) cells, plays a crucial role in the differentiation potential, particularly along the neural lineage, regulating gene induction and H3 'Lys-4' methylation at key developmental loci, including that mediated by retinoic acid. Does not affect ES cell self-renewal. Component or associated component of some histone methyltransferase complexes which regulates transcription through recruitment of those complexes to gene promoters. As part of the MLL1/MLL complex, involved in mono-, di- and trimethylation at 'Lys-4' of histone H3. Histone H3 'Lys-4' methylation represents a specific tag for epigenetic transcriptional activation. In association with ASH2L and WDR5, stimulates the histone methyltransferase activities of KMT2A, KMT2B, KMT2C, KMT2D, SETD1A and SETD1B. The chain is Retinoblastoma-binding protein 5 (RBBP5) from Homo sapiens (Human).